Reading from the N-terminus, the 600-residue chain is Glutamine--fructose-6-phosphate aminotransferase [isomerizing] (600 aa).

Cys-2 (nucleophile; for GATase activity) is an active-site residue. One can recognise a Glutamine amidotransferase type-2 domain in the interval 2-217; it reads CGIVGYIGQN…DKEIVLVSRN (216 aa). 2 consecutive SIS domains span residues 283–422 and 452–590; these read IRTA…VKGL and LARD…VDKP. Lys-595 acts as the For Fru-6P isomerization activity in catalysis.

As to quaternary structure, homodimer.

It localises to the cytoplasm. The catalysed reaction is D-fructose 6-phosphate + L-glutamine = D-glucosamine 6-phosphate + L-glutamate. Catalyzes the first step in hexosamine metabolism, converting fructose-6P into glucosamine-6P using glutamine as a nitrogen source. The chain is Glutamine--fructose-6-phosphate aminotransferase [isomerizing] from Oceanobacillus iheyensis (strain DSM 14371 / CIP 107618 / JCM 11309 / KCTC 3954 / HTE831).